The sequence spans 387 residues: MKFPSPFTPNSIKIMLLGSGELGKEVIIEAQRLGLETIAVDKYENAPAHGVAHRSYVVNMQDKEALLDLIQKENPTYILPEVEAISLEALLEAEEKGFCVIPSAKAVSLTMNRKGIRTFAAEEVGVKTSQYRFVKTLDELRSAAEEIGYPCVIKPVMSSSGHGQSVCRMAEEIEACFEEAKEARGDSSELIVEEFIPFDYEITLLTLNNGKKITFCDPIGHIQKGGDYIFSWQPAQMKKSVLKKAQKIARDVVSALGGRGIFGVELFIKKNEVYFSEVSPRPHDTGMVTLITQNFSEFALHLRAVLGAPLHVERISAGASAAFKSSQESQTPSVTLPKEAYAKDCDFRVFGKPVSHEGRRMAVLLIKDEEAESALKRAKKLIKKVSE.

Residues 21 to 22 (EL) and Glu81 contribute to the N(1)-(5-phospho-beta-D-ribosyl)glycinamide site. Residues Arg113, Lys154, 159 to 164 (SSGHGQ), 193 to 196 (EEFI), and Glu201 each bind ATP. One can recognise an ATP-grasp domain in the interval 118 to 306 (TFAAEEVGVK…EFALHLRAVL (189 aa)). Glu265 and Glu277 together coordinate Mg(2+). Residues Asp284, Lys352, and 359–360 (RR) contribute to the N(1)-(5-phospho-beta-D-ribosyl)glycinamide site.

It belongs to the PurK/PurT family. As to quaternary structure, homodimer.

The catalysed reaction is N(1)-(5-phospho-beta-D-ribosyl)glycinamide + formate + ATP = N(2)-formyl-N(1)-(5-phospho-beta-D-ribosyl)glycinamide + ADP + phosphate + H(+). It functions in the pathway purine metabolism; IMP biosynthesis via de novo pathway; N(2)-formyl-N(1)-(5-phospho-D-ribosyl)glycinamide from N(1)-(5-phospho-D-ribosyl)glycinamide (formate route): step 1/1. Its function is as follows. Involved in the de novo purine biosynthesis. Catalyzes the transfer of formate to 5-phospho-ribosyl-glycinamide (GAR), producing 5-phospho-ribosyl-N-formylglycinamide (FGAR). Formate is provided by PurU via hydrolysis of 10-formyl-tetrahydrofolate. The polypeptide is Formate-dependent phosphoribosylglycinamide formyltransferase (Wolinella succinogenes (strain ATCC 29543 / DSM 1740 / CCUG 13145 / JCM 31913 / LMG 7466 / NCTC 11488 / FDC 602W) (Vibrio succinogenes)).